The sequence spans 159 residues: Phosphopantetheine adenylyltransferase (159 aa).

Histidine 16 contributes to the ATP binding site. Substrate-binding residues include lysine 40, methionine 72, and arginine 86. ATP-binding positions include 87 to 89 (GLR), glutamate 97, and 122 to 128 (YQYLSAS).

It belongs to the bacterial CoaD family. In terms of assembly, homohexamer. It depends on Mg(2+) as a cofactor.

Its subcellular location is the cytoplasm. The catalysed reaction is (R)-4'-phosphopantetheine + ATP + H(+) = 3'-dephospho-CoA + diphosphate. It functions in the pathway cofactor biosynthesis; coenzyme A biosynthesis; CoA from (R)-pantothenate: step 4/5. In terms of biological role, reversibly transfers an adenylyl group from ATP to 4'-phosphopantetheine, yielding dephospho-CoA (dPCoA) and pyrophosphate. This chain is Phosphopantetheine adenylyltransferase, found in Dehalococcoides mccartyi (strain CBDB1).